The sequence spans 339 residues: Glycerol-3-phosphate dehydrogenase [NAD(P)+] (339 aa).

4 residues coordinate NADPH: Ser14, Tyr15, His35, and Lys109. Residues Lys109, Gly138, and Thr140 each coordinate sn-glycerol 3-phosphate. Ala142 is an NADPH binding site. Sn-glycerol 3-phosphate contacts are provided by Lys194, Asp247, Ser257, Arg258, and Asn259. Catalysis depends on Lys194, which acts as the Proton acceptor. Arg258 serves as a coordination point for NADPH. 2 residues coordinate NADPH: Val282 and Glu284.

Belongs to the NAD-dependent glycerol-3-phosphate dehydrogenase family.

It localises to the cytoplasm. The catalysed reaction is sn-glycerol 3-phosphate + NAD(+) = dihydroxyacetone phosphate + NADH + H(+). It carries out the reaction sn-glycerol 3-phosphate + NADP(+) = dihydroxyacetone phosphate + NADPH + H(+). The protein operates within membrane lipid metabolism; glycerophospholipid metabolism. In terms of biological role, catalyzes the reduction of the glycolytic intermediate dihydroxyacetone phosphate (DHAP) to sn-glycerol 3-phosphate (G3P), the key precursor for phospholipid synthesis. The protein is Glycerol-3-phosphate dehydrogenase [NAD(P)+] of Shewanella halifaxensis (strain HAW-EB4).